A 378-amino-acid chain; its full sequence is Histone deacetylase 8 (378 aa).

Positions R15–G325 are histone deacetylase. D102 contacts substrate. H144 functions as the Proton acceptor in the catalytic mechanism. Residue G152 coordinates substrate. A divalent metal cation-binding residues include D179, H181, and D268. Y307 provides a ligand contact to substrate.

This sequence belongs to the histone deacetylase family. HD type 1 subfamily. The cofactor is a divalent metal cation.

Its subcellular location is the nucleus. The protein localises to the chromosome. It is found in the cytoplasm. The enzyme catalyses N(6)-acetyl-L-lysyl-[histone] + H2O = L-lysyl-[histone] + acetate. It carries out the reaction N(6)-acetyl-L-lysyl-[protein] + H2O = L-lysyl-[protein] + acetate. It catalyses the reaction N(6)-(2E)-butenoyl-L-lysyl-[protein] + H2O = (2E)-2-butenoate + L-lysyl-[protein]. Its activity is inhibited by trichostatin A (TSA) and butyrate, 2 well known histone deacetylase inhibitors. Functionally, histone deacetylase that catalyzes the deacetylation of lysine residues on the N-terminal part of the core histones (H2A, H2B, H3 and H4). Histone deacetylation gives a tag for epigenetic repression and plays an important role in transcriptional regulation, cell cycle progression and developmental events. Histone deacetylases act via the formation of large multiprotein complexes. Also involved in the deacetylation of non-histone proteins. In addition to protein deacetylase activity, also has protein-lysine deacylase activity: acts as a protein decrotonylase by mediating decrotonylation ((2E)-butenoyl) of histones. This chain is Histone deacetylase 8 (hdac8), found in Danio rerio (Zebrafish).